A 92-amino-acid polypeptide reads, in one-letter code: Small ribosomal subunit protein uS19c (92 aa).

This sequence belongs to the universal ribosomal protein uS19 family.

Its subcellular location is the plastid. The protein localises to the chloroplast. In terms of biological role, protein S19 forms a complex with S13 that binds strongly to the 16S ribosomal RNA. The chain is Small ribosomal subunit protein uS19c from Eucalyptus globulus subsp. globulus (Tasmanian blue gum).